The primary structure comprises 927 residues: LPS-assembly protein LptD (927 aa).

The N-terminal stretch at 1–22 (MALKSPAFRKKFPLLVTGSLLA) is a signal peptide. The disordered stretch occupies residues 60 to 100 (LPPRPVHSTASVSSNGTVTSESSSSGEQVAGPQLVTEAKGK). A compositionally biased stretch (low complexity) spans 70 to 86 (SVSSNGTVTSESSSSGE).

The protein belongs to the LptD family. In terms of assembly, component of the lipopolysaccharide transport and assembly complex. Interacts with LptE and LptA.

It is found in the cell outer membrane. In terms of biological role, together with LptE, is involved in the assembly of lipopolysaccharide (LPS) at the surface of the outer membrane. The sequence is that of LPS-assembly protein LptD from Pseudomonas syringae pv. tomato (strain ATCC BAA-871 / DC3000).